Consider the following 409-residue polypeptide: Probable glutaryl-CoA dehydrogenase, mitochondrial (409 aa).

110–111 (RS) contributes to the substrate binding site. FAD is bound by residues 149-152 (FGLT), serine 158, and 184-186 (WIS). Serine 158 provides a ligand contact to substrate. Residues 261-265 (FGCLN) and arginine 268 contribute to the substrate site. The active-site Proton acceptor is glutamate 388. Residues threonine 390 and phenylalanine 408 each coordinate FAD.

The protein belongs to the acyl-CoA dehydrogenase family. Requires FAD as cofactor.

It is found in the mitochondrion matrix. It carries out the reaction glutaryl-CoA + oxidized [electron-transfer flavoprotein] + 2 H(+) = (2E)-butenoyl-CoA + reduced [electron-transfer flavoprotein] + CO2. It functions in the pathway amino-acid metabolism; lysine degradation. Its pathway is amino-acid metabolism; tryptophan metabolism. The sequence is that of Probable glutaryl-CoA dehydrogenase, mitochondrial from Caenorhabditis elegans.